Reading from the N-terminus, the 251-residue chain is Probable phosphatase Sama_2233 (251 aa).

Zn(2+) contacts are provided by His8, His10, His16, His41, Glu74, His102, His132, Asp193, and His195.

The protein belongs to the PHP family. Zn(2+) is required as a cofactor.

This Shewanella amazonensis (strain ATCC BAA-1098 / SB2B) protein is Probable phosphatase Sama_2233.